A 41-amino-acid chain; its full sequence is Peptide Hact-SCRiP1 (41 aa).

4 cysteine pairs are disulfide-bonded: C5/C37, C12/C31, C19/C38, and C26/C39.

In terms of tissue distribution, expressed in tentacles.

It is found in the nematocyst. Its subcellular location is the secreted. Peptide with unknown function. Does not exhibit any effect on human ion channel TRPV1 in a Xenopus laevis oocytes assay. This chain is Peptide Hact-SCRiP1, found in Heliofungia actiniformis (Mushroom coral).